Reading from the N-terminus, the 534-residue chain is Anther-specific proline-rich protein APG (534 aa).

Residues Met1 to Ala35 form the signal peptide. Positions Asn59–Lys196 are enriched in pro residues. The interval Asn59–Ile202 is disordered. Ser211 serves as the catalytic Nucleophile. Catalysis depends on residues Asp508 and His511.

The protein belongs to the 'GDSL' lipolytic enzyme family. As to expression, found in sporophytic and gametophytic cell types in the anther, only in male fertile plants.

The chain is Anther-specific proline-rich protein APG (APG) from Arabidopsis thaliana (Mouse-ear cress).